We begin with the raw amino-acid sequence, 257 residues long: UPF0246 protein Mmc1_3117 (257 aa).

It belongs to the UPF0246 family.

The sequence is that of UPF0246 protein Mmc1_3117 from Magnetococcus marinus (strain ATCC BAA-1437 / JCM 17883 / MC-1).